The following is a 138-amino-acid chain: Thyrotropin subunit beta (138 aa).

The N-terminal stretch at 1–20 (MTAIFLMSMVFGLACGQTMS) is a signal peptide. 6 cysteine pairs are disulfide-bonded: Cys22-Cys72, Cys36-Cys87, Cys39-Cys125, Cys47-Cys103, Cys51-Cys105, and Cys108-Cys115. N-linked (GlcNAc...) asparagine glycosylation is present at Asn43. Positions 133 to 138 (VVEFSI) are excised as a propeptide.

Belongs to the glycoprotein hormones subunit beta family. In terms of assembly, heterodimer of a common alpha chain and a unique beta chain which confers biological specificity to thyrotropin, lutropin, follitropin and gonadotropin.

The protein localises to the secreted. Functionally, indispensable for the control of thyroid structure and metabolism. This Equus caballus (Horse) protein is Thyrotropin subunit beta (TSHB).